The following is a 1288-amino-acid chain: CLIP-associating protein 2 (1288 aa).

Positions 1-62 are disordered; that stretch reads MALSLSQDRS…AAKSGASKEG (62 aa). Low complexity-rich tracts occupy residues 19-32 and 40-62; these read GSRP…FKVP and ESAS…SKEG. Positions 62–312 are TOG 1; that stretch reads GAGAVDEEDF…RTLQSCLKSS (251 aa). HEAT repeat units follow at residues 174–209, 210–246, and 251–288; these read HGAE…IRHT, HVPR…EWQT, and RHAA…HFPG. 2 disordered regions span residues 314 to 571 and 614 to 634; these read SVAS…SSRL and ANSD…NGSI. 2 stretches are compositionally biased toward low complexity: residues 317 to 337 and 347 to 358; these read SLPQ…RPLS and PAGSKSSGSPAS. Composition is skewed to polar residues over residues 406–421 and 468–478; these read KQTL…SQVD and TALSTLSTGAQ. The SXIP motif 1 motif lies at 490–493; it reads SRIP. The span at 496–518 shows a compositional bias: polar residues; the sequence is QGCSRDSSPTRLSVAPSNISHIY. The short motif at 527 to 530 is the SXIP motif 2 element; that stretch reads SRIP. The span at 616–630 shows a compositional bias: low complexity; that stretch reads SDASSACSERSYSSR. Positions 638-889 are TOG 2; it reads MRQTEDVAEV…TKLLQNHLRN (252 aa). HEAT repeat units follow at residues 718–755 and 780–817; these read RVFS…KMGA and LQFT…QMEP. A compositionally biased stretch (polar residues) spans 891 to 900; that stretch reads GNTAQASIGS. Disordered regions lie at residues 891–936 and 960–1047; these read GNTA…FDYD and SVRS…DSGV. Over residues 912 to 931 the composition is skewed to low complexity; it reads SWSSPLTSPTNTSQNTPSPS. Residues 963 to 977 show a composition bias toward basic and acidic residues; it reads SQEDMTEPPRKREGD. Residues 1019–1030 are compositionally biased toward low complexity; sequence SDSSFGSSSFNK. Over residues 1036–1046 the composition is skewed to acidic residues; the sequence is DQEESLTDDSG. HEAT repeat units follow at residues 1047–1086, 1091–1128, 1167–1204, and 1209–1246; these read VDQS…ETQL, EHFK…RQPW, ISPD…RLPK, and QMLP…VIGE.

It belongs to the CLASP family. In terms of assembly, interacts with microtubules.

The protein resides in the cytoplasm. It localises to the cytoskeleton. It is found in the microtubule organizing center. Its subcellular location is the centrosome. The protein localises to the chromosome. The protein resides in the centromere. It localises to the kinetochore. It is found in the spindle. Its subcellular location is the golgi apparatus. The protein localises to the trans-Golgi network. The protein resides in the cell membrane. It localises to the cell projection. It is found in the ruffle membrane. Functionally, microtubule plus-end tracking protein that promotes the stabilization of dynamic microtubules. Involved in the nucleation of noncentrosomal microtubules originating from the trans-Golgi network (TGN). Required for the polarization of the cytoplasmic microtubule arrays in migrating cells towards the leading edge of the cell. May act at the cell cortex to enhance the frequency of rescue of depolymerizing microtubules. This cortical microtubule stabilizing activity is regulated at least in part by phosphatidylinositol 3-kinase signaling. Also performs a similar stabilizing function at the kinetochore which is essential for the bipolar alignment of chromosomes on the mitotic spindle. In Danio rerio (Zebrafish), this protein is CLIP-associating protein 2 (clasp2).